Here is a 156-residue protein sequence, read N- to C-terminus: Small ribosomal subunit protein uS7 (156 aa).

This sequence belongs to the universal ribosomal protein uS7 family. Part of the 30S ribosomal subunit. Contacts proteins S9 and S11.

Functionally, one of the primary rRNA binding proteins, it binds directly to 16S rRNA where it nucleates assembly of the head domain of the 30S subunit. Is located at the subunit interface close to the decoding center, probably blocks exit of the E-site tRNA. In Desulforudis audaxviator (strain MP104C), this protein is Small ribosomal subunit protein uS7.